We begin with the raw amino-acid sequence, 383 residues long: Queuine tRNA-ribosyltransferase (383 aa).

The active-site Proton acceptor is the aspartate 89. Substrate is bound by residues 89 to 93 (DSGGF), aspartate 143, glutamine 187, and glycine 214. The tract at residues 245–251 (GVGDLID) is RNA binding. Catalysis depends on aspartate 264, which acts as the Nucleophile. The interval 269–273 (TRNAR) is RNA binding; important for wobble base 34 recognition. Residues cysteine 302, cysteine 304, cysteine 307, and histidine 333 each coordinate Zn(2+).

The protein belongs to the queuine tRNA-ribosyltransferase family. In terms of assembly, homodimer. Within each dimer, one monomer is responsible for RNA recognition and catalysis, while the other monomer binds to the replacement base PreQ1. The cofactor is Zn(2+).

It carries out the reaction 7-aminomethyl-7-carbaguanine + guanosine(34) in tRNA = 7-aminomethyl-7-carbaguanosine(34) in tRNA + guanine. It participates in tRNA modification; tRNA-queuosine biosynthesis. In terms of biological role, catalyzes the base-exchange of a guanine (G) residue with the queuine precursor 7-aminomethyl-7-deazaguanine (PreQ1) at position 34 (anticodon wobble position) in tRNAs with GU(N) anticodons (tRNA-Asp, -Asn, -His and -Tyr). Catalysis occurs through a double-displacement mechanism. The nucleophile active site attacks the C1' of nucleotide 34 to detach the guanine base from the RNA, forming a covalent enzyme-RNA intermediate. The proton acceptor active site deprotonates the incoming PreQ1, allowing a nucleophilic attack on the C1' of the ribose to form the product. After dissociation, two additional enzymatic reactions on the tRNA convert PreQ1 to queuine (Q), resulting in the hypermodified nucleoside queuosine (7-(((4,5-cis-dihydroxy-2-cyclopenten-1-yl)amino)methyl)-7-deazaguanosine). This is Queuine tRNA-ribosyltransferase from Thermodesulfovibrio yellowstonii (strain ATCC 51303 / DSM 11347 / YP87).